A 640-amino-acid polypeptide reads, in one-letter code: MTPNGYLIFEDESFLDSTVAKMNALRKSGQFCDVRLLVCGHELMAHKAVLACCSPYLFEIFNADTEPQGGVSLVKFDDLNPDAMEVLLNYAYTAQLKADKSLVSDVYSAAKKLKLERVKQICGEYLLSKMDSQSAISYRNFASSMADGRLLGKIDGYIQDHLHEISEQDDFLKLPRLKLEVMLEDNLNLPGNGKLYSKVISWVQRSLWKNGDPLEKLMEEVQTLYYSADHKLHDGSLLEGQAEVCSTEDDHIQFVQKKPPRERDEMGSGASGSISPSNSQFNKHEWKYIASEKTTSNSYLCLAVLRGLLCVISLHGRTSPHNSPSATPCVLKSPNFEAQLEDLQEKLLKPMHYARSGLGTAELDCKLIAAGGYNREECLRTVECYDPKKDCWTFIAPMRTPRARFQMAVLMGEVYVMGGSNGHSDELSCGEMYNPRADEWIQVPELRTNRCNAGVCSLQNKLFVVGGSDPCGQKGLKNCDSFDPVTKMWTSCAPLNIKRHQAAVCELSGYMYVIGGAESWNCLNSVERYNPENNTWTLVASMNVARRGAGVAVYEGKLFVVGGFDGSHALRCVEVYDPATNEWRMLGSMTSARSNAGLAVLNNVLCAVGGFDGNEFLNSMEVYNLEKNEWSPFIEALGKN.

A BTB domain is found at Cys-32–Lys-100. The BACK domain maps to Ala-135–Asn-186. A disordered region spans residues Lys-257–Asn-278. Positions Gly-267–Asn-278 are enriched in low complexity. Kelch repeat units follow at residues Lys-366–Gly-412, Glu-413–Asn-460, Leu-462–Gly-509, Tyr-510–Gly-556, Lys-557–Asn-603, and Leu-605–Asn-640.

The protein resides in the cytoplasm. Its subcellular location is the cytoskeleton. It is found in the nucleus. Functionally, plays a role in cell division and in the dynamic organization of the actin skeleton as a stabilizer of actin filaments by association with F-actin through Kelch repeats. This Danio rerio (Zebrafish) protein is Influenza virus NS1A-binding protein homolog B (ivns1abpb).